We begin with the raw amino-acid sequence, 174 residues long: Shikimate kinase (174 aa).

15-20 (GTGKST) contributes to the ATP binding site. Position 19 (S19) interacts with Mg(2+). Substrate-binding residues include D37, R61, and G82. R120 is a binding site for ATP. Substrate is bound at residue R138.

This sequence belongs to the shikimate kinase family. In terms of assembly, monomer. It depends on Mg(2+) as a cofactor.

Its subcellular location is the cytoplasm. It carries out the reaction shikimate + ATP = 3-phosphoshikimate + ADP + H(+). It functions in the pathway metabolic intermediate biosynthesis; chorismate biosynthesis; chorismate from D-erythrose 4-phosphate and phosphoenolpyruvate: step 5/7. Its function is as follows. Catalyzes the specific phosphorylation of the 3-hydroxyl group of shikimic acid using ATP as a cosubstrate. This is Shikimate kinase from Staphylococcus aureus (strain Mu3 / ATCC 700698).